The chain runs to 418 residues: MQHKRSRALASPRSPFLFALLALAVGGTANAHDDGLPAFRYSAELLGQLQLPSVALPLNDELFLYGRDAEAFDLEAYLALNAPALRDKSEYLEHWSGYYSINPKVLLTLMVMQSGPLGAPDERALAAPLGRLSAKRGFDAQVRDVLQQLSRRYYGFEEYQLRQAAARKAVGEDGLNAASAALLGLLREGAKASAVQGGNPLGAYAQTFQRLFGTPAAELLQPRNRVARQLQAKAALAPPSNLMQLPWRQGYSWQPNGAHSNTGSGYPYSSFDASYDWPRWGSATYSVVAAHAGTVRVLSRCQVRVTHPSGWATNYYHMDQIQVSNGQQVSADTKLGVYASNINTALCEGGSSTGPHLHFSLLYNGAFVSLQGASFGPYRINVGTSNYDNDCRRYYFYNQSAGTTHCAFRPLYNPGLAL.

The first 31 residues, 1–31, serve as a signal peptide directing secretion; sequence MQHKRSRALASPRSPFLFALLALAVGGTANA. A propeptide spanning residues 32 to 236 is cleaved from the precursor; sequence HDDGLPAFRY…ARQLQAKAAL (205 aa). Zn(2+) contacts are provided by H259 and D272. A disulfide bond links C301 and C347. Residues H317 and H356 each act as proton donor/acceptor in the active site. H358 lines the Zn(2+) pocket. C391 and C406 are disulfide-bonded.

This sequence belongs to the peptidase M23A family. The cofactor is Zn(2+).

It localises to the secreted. Functionally, involved in proteolysis and elastolysis (degradation of the host protein elastin). Has staphylolytic activity (degrades pentaglycine cross-links in cell wall peptidoglycan), preferring Gly-Gly-|-X substrates where X is Ala or Gly. Enhances the elastolytic but not proteolytic activity of elastase (lasB) and elastolytic activity of other proteases. Degradation of elastin is likely to contribute to the pathogenicity of P.aeruginosa. This chain is Protease LasA (lasA), found in Pseudomonas aeruginosa (strain UCBPP-PA14).